A 345-amino-acid polypeptide reads, in one-letter code: sn-glycerol-3-phosphate import ATP-binding protein UgpC (345 aa).

The region spanning 4–235 (IQLLNIKKQY…PKTIFVADFI (232 aa)) is the ABC transporter domain. Residue 37–44 (GPSGCGKS) participates in ATP binding.

This sequence belongs to the ABC transporter superfamily. sn-glycerol-3-phosphate importer (TC 3.A.1.1.3) family. The complex is composed of two ATP-binding proteins (UgpC), two transmembrane proteins (UgpA and UgpE) and a solute-binding protein (UgpB).

The protein localises to the cell inner membrane. The catalysed reaction is sn-glycerol 3-phosphate(out) + ATP + H2O = sn-glycerol 3-phosphate(in) + ADP + phosphate + H(+). Functionally, part of the ABC transporter complex UgpBAEC involved in sn-glycerol-3-phosphate (G3P) import. Responsible for energy coupling to the transport system. This is sn-glycerol-3-phosphate import ATP-binding protein UgpC from Bartonella bacilliformis (strain ATCC 35685 / KC583 / Herrer 020/F12,63).